The following is an 86-amino-acid chain: Photosystem I reaction center subunit PsaK (86 aa).

A run of 2 helical transmembrane segments spans residues Leu-14–Phe-34 and Phe-57–Val-77.

Belongs to the PsaG/PsaK family.

Its subcellular location is the cellular thylakoid membrane. The protein is Photosystem I reaction center subunit PsaK of Nostoc punctiforme (strain ATCC 29133 / PCC 73102).